The following is a 212-amino-acid chain: NAD(P)H-hydrate epimerase (212 aa).

Positions 11 to 212 constitute a YjeF N-terminal domain; sequence MRHYDFYTIN…ANDMGTYAVD (202 aa). Position 60–64 (60–64) interacts with (6S)-NADPHX; it reads NNGGD. The K(+) site is built by N61 and D123. (6S)-NADPHX is bound by residues 127-133, Y138, and D156; that span reads GIGIDRA. Residue S159 coordinates K(+).

It belongs to the NnrE/AIBP family. K(+) is required as a cofactor.

The enzyme catalyses (6R)-NADHX = (6S)-NADHX. The catalysed reaction is (6R)-NADPHX = (6S)-NADPHX. Functionally, catalyzes the epimerization of the S- and R-forms of NAD(P)HX, a damaged form of NAD(P)H that is a result of enzymatic or heat-dependent hydration. This is a prerequisite for the S-specific NAD(P)H-hydrate dehydratase to allow the repair of both epimers of NAD(P)HX. The protein is NAD(P)H-hydrate epimerase of Limosilactobacillus reuteri (strain DSM 20016) (Lactobacillus reuteri).